The following is a 276-amino-acid chain: NH(3)-dependent NAD(+) synthetase (276 aa).

43–50 (GISGGVDS) serves as a coordination point for ATP. Aspartate 49 serves as a coordination point for Mg(2+). A deamido-NAD(+)-binding site is contributed by arginine 146. Residue threonine 166 coordinates ATP. Glutamate 171 contributes to the Mg(2+) binding site. The deamido-NAD(+) site is built by lysine 179 and aspartate 186. Positions 195 and 217 each coordinate ATP. 266–267 (HK) is a deamido-NAD(+) binding site.

It belongs to the NAD synthetase family. As to quaternary structure, homodimer.

It carries out the reaction deamido-NAD(+) + NH4(+) + ATP = AMP + diphosphate + NAD(+) + H(+). It functions in the pathway cofactor biosynthesis; NAD(+) biosynthesis; NAD(+) from deamido-NAD(+) (ammonia route): step 1/1. Functionally, catalyzes the ATP-dependent amidation of deamido-NAD to form NAD. Uses ammonia as a nitrogen source. The chain is NH(3)-dependent NAD(+) synthetase from Vibrio campbellii (strain ATCC BAA-1116).